Consider the following 129-residue polypeptide: Glycine cleavage system H protein (129 aa).

The region spanning 24-106 is the Lipoyl-binding domain; the sequence is SYTVGITEHA…YGDGWFFRIM (83 aa). Lys-65 is subject to N6-lipoyllysine.

The protein belongs to the GcvH family. As to quaternary structure, the glycine cleavage system is composed of four proteins: P, T, L and H. Requires (R)-lipoate as cofactor.

Its function is as follows. The glycine cleavage system catalyzes the degradation of glycine. The H protein shuttles the methylamine group of glycine from the P protein to the T protein. The sequence is that of Glycine cleavage system H protein from Shewanella denitrificans (strain OS217 / ATCC BAA-1090 / DSM 15013).